The sequence spans 163 residues: Nucleotide-binding protein BPUM_1028 (163 aa).

It belongs to the YajQ family.

Its function is as follows. Nucleotide-binding protein. The sequence is that of Nucleotide-binding protein BPUM_1028 from Bacillus pumilus (strain SAFR-032).